Reading from the N-terminus, the 171-residue chain is Co-chaperone protein HscB homolog (171 aa).

In terms of domain architecture, J spans 2–74 (NHFELFGLPP…ISRAEYLLSQ (73 aa)).

The protein belongs to the HscB family. In terms of assembly, interacts with HscA and stimulates its ATPase activity.

Co-chaperone involved in the maturation of iron-sulfur cluster-containing proteins. Seems to help targeting proteins to be folded toward HscA. In Vibrio vulnificus (strain CMCP6), this protein is Co-chaperone protein HscB homolog.